Consider the following 417-residue polypeptide: 4-hydroxy-3-methylbut-2-en-1-yl diphosphate synthase (flavodoxin) (417 aa).

Positions 304, 307, 350, and 357 each coordinate [4Fe-4S] cluster.

It belongs to the IspG family. It depends on [4Fe-4S] cluster as a cofactor.

The enzyme catalyses (2E)-4-hydroxy-3-methylbut-2-enyl diphosphate + oxidized [flavodoxin] + H2O + 2 H(+) = 2-C-methyl-D-erythritol 2,4-cyclic diphosphate + reduced [flavodoxin]. The protein operates within isoprenoid biosynthesis; isopentenyl diphosphate biosynthesis via DXP pathway; isopentenyl diphosphate from 1-deoxy-D-xylulose 5-phosphate: step 5/6. Its function is as follows. Converts 2C-methyl-D-erythritol 2,4-cyclodiphosphate (ME-2,4cPP) into 1-hydroxy-2-methyl-2-(E)-butenyl 4-diphosphate. This chain is 4-hydroxy-3-methylbut-2-en-1-yl diphosphate synthase (flavodoxin), found in Rhizobium meliloti (strain 1021) (Ensifer meliloti).